The following is a 460-amino-acid chain: U-box domain-containing protein 9 (460 aa).

A U-box domain is found at serine 73–glutamate 147. ARM repeat units follow at residues threonine 201–isoleucine 244, serine 248–alanine 287, and aspartate 289–isoleucine 328.

As to quaternary structure, binds to SD11, SD16, SD17, SD18, SD113, SD129 and SD25. Phosphorylated by SD1-6 and SD1-7.

The protein resides in the nucleus. Its subcellular location is the cell membrane. The catalysed reaction is S-ubiquitinyl-[E2 ubiquitin-conjugating enzyme]-L-cysteine + [acceptor protein]-L-lysine = [E2 ubiquitin-conjugating enzyme]-L-cysteine + N(6)-ubiquitinyl-[acceptor protein]-L-lysine.. It functions in the pathway protein modification; protein ubiquitination. In terms of biological role, functions as an E3 ubiquitin ligase. May be involved in the abscisic acid-mediated signaling pathway, at least during germination. This is U-box domain-containing protein 9 (PUB9) from Arabidopsis thaliana (Mouse-ear cress).